Here is a 185-residue protein sequence, read N- to C-terminus: MLTLASKLKRDDGVKGSRTTSTTLDSMRRISVRDRLLVKEVAELEANLPCTCKVNFPDPNKLHYFHLTVSPDESYYQGGRFQFEIEVPDAYNMVPPKVKCLTRIWHPNITETGEICLSLLREHSIDGTGWAPTRTLKDVVWGLNSLFTDLLNFDDPLNIEAAEHHLRDKDEYRNKVEDYIKRYAR.

The disordered stretch occupies residues 1–21; sequence MLTLASKLKRDDGVKGSRTTS. The tract at residues 1-29 is interaction with uba3; the sequence is MLTLASKLKRDDGVKGSRTTSTTLDSMRR. In terms of domain architecture, UBC core spans 32–185; that stretch reads VRDRLLVKEV…VEDYIKRYAR (154 aa). C116 functions as the Glycyl thioester intermediate in the catalytic mechanism.

It belongs to the ubiquitin-conjugating enzyme family. UBE2F subfamily.

It catalyses the reaction [E1 NEDD8-activating enzyme]-S-[NEDD8 protein]-yl-L-cysteine + [E2 NEDD8-conjugating enzyme]-L-cysteine = [E1 NEDD8-activating enzyme]-L-cysteine + [E2 NEDD8-conjugating enzyme]-S-[NEDD8-protein]-yl-L-cysteine.. It participates in protein modification; protein neddylation. In terms of biological role, accepts the ubiquitin-like protein NEDD8 from the UBA3-NAE1 E1 complex and catalyzes its covalent attachment to other proteins. Together with the E3 ubiquitin ligase rnf7/rbx2, specifically neddylates cullin-5 (cul5). Does not neddylate cul1, cul2, cul3, cul4a or cul4b. In Xenopus laevis (African clawed frog), this protein is NEDD8-conjugating enzyme UBE2F (ube2f).